Here is a 447-residue protein sequence, read N- to C-terminus: MDTAQILETIKMISEENLDIRTITMGISLLDCIDSDSDKACQKIYDKITTKAKDLVKVGNQIATEYGIPVINKRVSVTPISLIAAASKDKDYVKYAKALDKAAQTLGIDFIGGYSALVQKGYQNGDRTLIKSLPQALAETNLVCASVNVGSTRSGINMDAVKEMGQVVKSASELDFMTNAKMVIFCNAVEDNPFMAGGFHGVGEPDAVINVGVSGPGVVKSALEKVKGASMDVVAETIKQTAFKVTRMGQLVGSIAAEKLNVPFGIVDLSLAPTPAVGDSVAQILEEIGLEQVGTHGTTAALAMLNDAVKKGGIMACSHVGGLSGAFIPVSEDAGMIDAVNAGSLNIEKLEAMTVVCSVGLDMIAIPGDTPAETISAMIADEAAIGMINNKTTAVRVVPVPGKDVGETVEFGGLLGHAPIMAVNKVSSADMINRGGLIPAPVHSFKN.

It belongs to the UPF0210 family. Homodimer.

The sequence is that of UPF0210 protein LSL_0162 from Ligilactobacillus salivarius (strain UCC118) (Lactobacillus salivarius).